The chain runs to 805 residues: Transitional endoplasmic reticulum ATPase (805 aa).

S3 carries the post-translational modification Phosphoserine. ATP-binding positions include 247-253 (PGTGKTL), N348, H384, and 521-526 (GCGKTL). The interval 768-805 (FGSFRFPAGGQGGAGPSQGAGGGSGGSHFNEEEDDLYG) is disordered. Residues 776-793 (GGQGGAGPSQGAGGGSGG) show a composition bias toward gly residues.

This sequence belongs to the AAA ATPase family. As to quaternary structure, homohexamer. Forms a ring-shaped particle of 12.5 nm diameter, that displays 6-fold radial symmetry. Interacts with the FACT/DUF complex, which includes subunits ssrp1/duf87 and supt16h/duf140. Phosphorylated.

The protein localises to the cytoplasm. Its subcellular location is the cytosol. The protein resides in the endoplasmic reticulum. It is found in the nucleus. It localises to the stress granule. The enzyme catalyses ATP + H2O = ADP + phosphate + H(+). Its activity is regulated as follows. ATPase activity is inhibited or reduced by lowering pH from 9.0 to 7.0, and by addition of Ca(2+), EDTA, KNO(3) or by treatment with N-ethylmaleimide (NEM). In terms of biological role, necessary for the fragmentation of Golgi stacks during mitosis and for their reassembly after mitosis. Involved in the formation of the nuclear envelope, and of the transitional endoplasmic reticulum (tER). The transfer of membranes from the endoplasmic reticulum to the Golgi apparatus occurs via 50-70 nm transition vesicles which derive from part-rough, part-smooth transitional elements of the endoplasmic reticulum (tER). Vesicle budding from the tER is an ATP-dependent process. Involved in endoplasmic reticulum stress-induced pre-emptive quality control, a mechanism that selectively attenuates the translocation of newly synthesized proteins into the endoplasmic reticulum and reroutes them to the cytosol for proteasomal degradation. Involved in clearance process by mediating G3BP1 extraction from stress granules. Also involved in DNA damage response: recruited to double-strand breaks (DSBs) sites and promotes the recruitment of tp53bp1 at DNA damage sites. Together with sprtn metalloprotease, involved in the repair of covalent DNA-protein cross-links (DPCs) during DNA synthesis. Involved in interstrand cross-link repair in response to replication stress by mediating unloading of the ubiquitinated CMG helicase complex. Enhances cell cycle progression and inhibits apoptosis at low temperatures. Essential for the maturation of ubiquitin-containing autophagosomes and the clearance of ubiquitinated protein by autophagy. Acts as a negative regulator of type I interferon production by promoting ubiquitination of rigi. May play a role in the ubiquitin-dependent sorting of membrane proteins to lysosomes where they undergo degradation. May more particularly play a role in caveolins sorting in cells. By controlling the steady-state expression of the IGF1R receptor, indirectly regulates the insulin-like growth factor receptor signaling pathway. The protein is Transitional endoplasmic reticulum ATPase of Xenopus tropicalis (Western clawed frog).